Here is a 79-residue protein sequence, read N- to C-terminus: MQIKNIVAVLATVTAINAQVGIEPNATTPNATQPNATQPNTTLPTASVTTTVSIGEAVVNTMAAGAFGAAIAAGVAFLF.

The first 18 residues, 1 to 18, serve as a signal peptide directing secretion; sequence MQIKNIVAVLATVTAINA. The interval 24 to 44 is disordered; it reads PNATTPNATQPNATQPNTTLP. N-linked (GlcNAc...) asparagine glycosylation is found at Asn25, Asn30, Asn35, and Asn40. Gly55 is lipidated: GPI-anchor amidated glycine. Residues 56 to 79 constitute a propeptide, removed in mature form; that stretch reads EAVVNTMAAGAFGAAIAAGVAFLF.

The protein resides in the cell membrane. This is an uncharacterized protein from Saccharomyces cerevisiae (strain ATCC 204508 / S288c) (Baker's yeast).